The primary structure comprises 93 residues: Phosphoribosyl-ATP pyrophosphatase (93 aa).

This sequence belongs to the PRA-PH family.

It localises to the cytoplasm. The catalysed reaction is 1-(5-phospho-beta-D-ribosyl)-ATP + H2O = 1-(5-phospho-beta-D-ribosyl)-5'-AMP + diphosphate + H(+). It participates in amino-acid biosynthesis; L-histidine biosynthesis; L-histidine from 5-phospho-alpha-D-ribose 1-diphosphate: step 2/9. The chain is Phosphoribosyl-ATP pyrophosphatase from Mycobacterium leprae (strain Br4923).